The following is a 138-amino-acid chain: MNTIHVDVVSAEESIFTGQARFVALPGEVGELGIYPRHAPLITRIKPGSVRIEMADGSEEFVFVAGGLLEVQPHCVTVLSDTAIRGKDLDDEKANAAKAAAEEALKNAKSDLDLAKAQSELAVMAAQIAALRKFRQKK.

This sequence belongs to the ATPase epsilon chain family. As to quaternary structure, F-type ATPases have 2 components, CF(1) - the catalytic core - and CF(0) - the membrane proton channel. CF(1) has five subunits: alpha(3), beta(3), gamma(1), delta(1), epsilon(1). CF(0) has three main subunits: a, b and c.

It is found in the cell inner membrane. In terms of biological role, produces ATP from ADP in the presence of a proton gradient across the membrane. In Verminephrobacter eiseniae (strain EF01-2), this protein is ATP synthase epsilon chain.